The following is a 213-amino-acid chain: Flagellar transcriptional regulator FlhC (213 aa).

Zn(2+)-binding residues include Cys138, Cys141, Cys158, and Cys161.

It belongs to the FlhC family. In terms of assembly, heterohexamer composed of two FlhC and four FlhD subunits. Each FlhC binds a FlhD dimer, forming a heterotrimer, and a hexamer assembles by dimerization of two heterotrimers. The cofactor is Zn(2+).

It is found in the cytoplasm. Its function is as follows. Functions in complex with FlhD as a master transcriptional regulator that regulates transcription of several flagellar and non-flagellar operons by binding to their promoter region. Activates expression of class 2 flagellar genes, including fliA, which is a flagellum-specific sigma factor that turns on the class 3 genes. Also regulates genes whose products function in a variety of physiological pathways. This chain is Flagellar transcriptional regulator FlhC, found in Cupriavidus metallidurans (strain ATCC 43123 / DSM 2839 / NBRC 102507 / CH34) (Ralstonia metallidurans).